Consider the following 484-residue polypeptide: tRNA sulfurtransferase (484 aa).

The 105-residue stretch at 63–167 (ANLILLLSST…NEKLFFIDKK (105 aa)) folds into the THUMP domain. ATP contacts are provided by residues 185–186 (LI), lysine 267, glycine 289, and glutamine 298. A disulfide bond links cysteine 346 and cysteine 458. A Rhodanese domain is found at 406–484 (FAENEIVLDI…GFDNVKVYRP (79 aa)). Catalysis depends on cysteine 458, which acts as the Cysteine persulfide intermediate.

The protein belongs to the ThiI family.

The protein localises to the cytoplasm. It catalyses the reaction [ThiI sulfur-carrier protein]-S-sulfanyl-L-cysteine + a uridine in tRNA + 2 reduced [2Fe-2S]-[ferredoxin] + ATP + H(+) = [ThiI sulfur-carrier protein]-L-cysteine + a 4-thiouridine in tRNA + 2 oxidized [2Fe-2S]-[ferredoxin] + AMP + diphosphate. The enzyme catalyses [ThiS sulfur-carrier protein]-C-terminal Gly-Gly-AMP + S-sulfanyl-L-cysteinyl-[cysteine desulfurase] + AH2 = [ThiS sulfur-carrier protein]-C-terminal-Gly-aminoethanethioate + L-cysteinyl-[cysteine desulfurase] + A + AMP + 2 H(+). It participates in cofactor biosynthesis; thiamine diphosphate biosynthesis. Catalyzes the ATP-dependent transfer of a sulfur to tRNA to produce 4-thiouridine in position 8 of tRNAs, which functions as a near-UV photosensor. Also catalyzes the transfer of sulfur to the sulfur carrier protein ThiS, forming ThiS-thiocarboxylate. This is a step in the synthesis of thiazole, in the thiamine biosynthesis pathway. The sulfur is donated as persulfide by IscS. The chain is tRNA sulfurtransferase from Psychromonas ingrahamii (strain DSM 17664 / CCUG 51855 / 37).